Reading from the N-terminus, the 383-residue chain is MPNWLLPENIADVLPSEARKIEELRRVILDNFHLYGYELVMPPMLEYLDSLLAGAGHDMDLRTFKLVDQLSGRTLGLRADMTTQVARIDAHLLNRASVTRLCYSGSVLHTRPNGLHATREPLQIGAEIYGHAGLEADAEIQELALASLALAGFTQVRLDLCHVGVLRAIIENDANAQKDESALYTLLRAKDVPALQEITAAYGEESRRALLALPSLYGDATVLTRARKELPALPGITRALDELAALTSLAGEANVTIDLADLGGYQYESGAMFAIYVPGLPNAVARGGRYDHVGEAFGRARPATGFSMDLRELARLLPVAERKRAIRAPWGREALLRSKIVALRKAGEVVIQSLPGYENDQDEFECDRVLVLEDGNWIIKNLG.

The protein belongs to the class-II aminoacyl-tRNA synthetase family. HisZ subfamily. Heteromultimer composed of HisG and HisZ subunits.

Its subcellular location is the cytoplasm. Its pathway is amino-acid biosynthesis; L-histidine biosynthesis; L-histidine from 5-phospho-alpha-D-ribose 1-diphosphate: step 1/9. Its function is as follows. Required for the first step of histidine biosynthesis. May allow the feedback regulation of ATP phosphoribosyltransferase activity by histidine. The polypeptide is ATP phosphoribosyltransferase regulatory subunit (Janthinobacterium sp. (strain Marseille) (Minibacterium massiliensis)).